The chain runs to 2000 residues: Myosin-14 (2000 aa).

Ala2 is modified (N-acetylalanine). A Phosphothreonine modification is found at Thr33. The Myosin N-terminal SH3-like domain occupies 47 to 97; the sequence is TARRMVWVPSELHGFEAAALRDEGEEEAEVELAESGRRLRLPRDQIQRMNP. A Phosphoserine modification is found at Ser56. The Myosin motor domain occupies 101-804; that stretch reads SKAEDMAELT…VLAQLEEERD (704 aa). ATP is bound at residue 194–201; the sequence is GESGAGKT. An actin-binding region spans residues 682–704; that stretch reads LSRLMATLSNTNPSFVRCIVPNH. Residues 807–836 form the IQ domain; it reads VTDIIVSFQAAARGYLARRAFQRRQQQQSA. The stretch at 866-1951 forms a coiled coil; sequence LQVTRQDEVL…VTTLRNRLRR (1086 aa). Ser925 carries the post-translational modification Phosphoserine. Positions 1173–1197 are disordered; that stretch reads RGELEDTLDSTNAQQELRSKREQEV. Phosphothreonine is present on Thr1198. Phosphoserine is present on residues Ser1249 and Ser1280. Disordered regions lie at residues 1260-1311, 1597-1629, 1720-1751, 1910-1942, and 1967-2000; these read ELSS…AELE, HERDLQGRDDAGEERRRQLAKQLRDAEVERDEE, SDRARRQAQQDRDEMAEEVASGNLSKAATLEE, AEEEASRAQAGRRRLQRELEDVTESAESMNREV, and LEEGVASDEEEAEGAEPGSAPGQEPEAPPPATPQ. Residues 1290–1304 show a composition bias toward basic and acidic residues; that stretch reads SDSERARSEAAEKLQ. The span at 1720–1732 shows a compositional bias: basic and acidic residues; the sequence is SDRARRQAQQDRD. The segment covering 1971-1980 has biased composition (acidic residues); that stretch reads VASDEEEAEG. A phosphoserine mark is found at Ser1973 and Ser1985. Low complexity predominate over residues 1981–1991; it reads AEPGSAPGQEP. Thr1998 carries the post-translational modification Phosphothreonine.

The protein belongs to the TRAFAC class myosin-kinesin ATPase superfamily. Myosin family. In terms of assembly, myosin is a hexameric protein that consists of 2 heavy chain subunits (MHC), 2 alkali light chain subunits (MLC) and 2 regulatory light chain subunits (MLC-2). Highest levels in lung, kidney, brain and colon, very low levels in liver and bladder and no expression in spleen or seminal vesicle (at protein level). Isoform 1 is expressed in liver, kidney and testis with low levels in skeletal muscle and heart. Isoform 1 and isoform 2 are expressed in brain and lung. Isoform 2 is the main isoform expressed in skeletal muscle and heart. Isoform 3 is limited to brain stem, cerebellum and spinal cord.

Its function is as follows. Cellular myosin that appears to play a role in cytokinesis, cell shape, and specialized functions such as secretion and capping. This chain is Myosin-14 (Myh14), found in Mus musculus (Mouse).